Here is a 90-residue protein sequence, read N- to C-terminus: MPRSIKKGPFVDPHLQKKVLEASASQSRRPIKTWSRRSMVVPEMIGLTIAVHNGRQHVPILVTENMVGHKLGEFSPTRTFKGHVANKKSR.

This sequence belongs to the universal ribosomal protein uS19 family.

In terms of biological role, protein S19 forms a complex with S13 that binds strongly to the 16S ribosomal RNA. The polypeptide is Small ribosomal subunit protein uS19 (Nitrosococcus oceani (strain ATCC 19707 / BCRC 17464 / JCM 30415 / NCIMB 11848 / C-107)).